The chain runs to 353 residues: Quinolinate synthase (353 aa).

The iminosuccinate site is built by His47 and Ser68. A [4Fe-4S] cluster-binding site is contributed by Cys113. Iminosuccinate is bound by residues 139 to 141 and Ser156; that span reads YAN. Position 200 (Cys200) interacts with [4Fe-4S] cluster. Residues 226-228 and Thr243 contribute to the iminosuccinate site; that span reads HPE. Cys297 provides a ligand contact to [4Fe-4S] cluster.

It belongs to the quinolinate synthase family. Type 1 subfamily. [4Fe-4S] cluster serves as cofactor.

Its subcellular location is the cytoplasm. The catalysed reaction is iminosuccinate + dihydroxyacetone phosphate = quinolinate + phosphate + 2 H2O + H(+). The protein operates within cofactor biosynthesis; NAD(+) biosynthesis; quinolinate from iminoaspartate: step 1/1. In terms of biological role, catalyzes the condensation of iminoaspartate with dihydroxyacetone phosphate to form quinolinate. The chain is Quinolinate synthase from Yersinia pestis bv. Antiqua (strain Nepal516).